Here is a 620-residue protein sequence, read N- to C-terminus: 1-deoxy-D-xylulose-5-phosphate synthase (620 aa).

Residues His80 and 121–123 (GHS) contribute to the thiamine diphosphate site. Residue Asp152 participates in Mg(2+) binding. Thiamine diphosphate-binding positions include 153–154 (GA), Asn181, Tyr288, and Glu370. Asn181 lines the Mg(2+) pocket.

It belongs to the transketolase family. DXPS subfamily. In terms of assembly, homodimer. It depends on Mg(2+) as a cofactor. The cofactor is thiamine diphosphate.

It carries out the reaction D-glyceraldehyde 3-phosphate + pyruvate + H(+) = 1-deoxy-D-xylulose 5-phosphate + CO2. It participates in metabolic intermediate biosynthesis; 1-deoxy-D-xylulose 5-phosphate biosynthesis; 1-deoxy-D-xylulose 5-phosphate from D-glyceraldehyde 3-phosphate and pyruvate: step 1/1. Catalyzes the acyloin condensation reaction between C atoms 2 and 3 of pyruvate and glyceraldehyde 3-phosphate to yield 1-deoxy-D-xylulose-5-phosphate (DXP). This is 1-deoxy-D-xylulose-5-phosphate synthase from Klebsiella pneumoniae subsp. pneumoniae (strain ATCC 700721 / MGH 78578).